The following is a 401-amino-acid chain: Ninja-family protein MODD (401 aa).

Disordered stretches follow at residues 95 to 135 (KQGV…GEGR) and 215 to 238 (TGNK…GLPP). Low complexity predominate over residues 105 to 130 (RPSGGAEAEPAAARLPASGSPSSGSS). Over residues 217-226 (NKKTGGNVNH) the composition is skewed to polar residues.

This sequence belongs to the Ninja family. In terms of assembly, interacts with BZIP46, TPR3 and PUB70.

It localises to the nucleus. In terms of biological role, acts as a negative regulator of abscisic acid (ABA) signaling and drought tolerance. Mediates deactivation and degradation of BZIP46, a positive regulator of ABA signaling and drought stress tolerance. Represses BZIP46 activity via interaction with the TPR3-HDAC1 corepressor complex and down-regulation of the histone acetylation level at BZIP46 target genes. Promotes BZIP46 degradation via interaction with the U-box type ubiquitin E3 ligase PUB70. The protein is Ninja-family protein MODD of Oryza sativa subsp. japonica (Rice).